The chain runs to 184 residues: ADP-ribosylation factor-like protein 2 (184 aa).

Gly-2 carries N-myristoyl glycine lipidation. Residues 23–30 (GLDNAGKT), 66–70 (DVGGQ), Gly-68, and 125–128 (NKSD) each bind GTP.

This sequence belongs to the small GTPase superfamily. Arf family.

It is found in the cytoplasm. It localises to the cell membrane. Its subcellular location is the cytoskeleton. The protein resides in the microtubule organizing center. The protein localises to the centrosome. Its function is as follows. GTP-binding protein that functions in embryogenesis, cytokinesis, germline development and microtubulule cytoskeleton dynamics. This is ADP-ribosylation factor-like protein 2 (evl-20.1) from Caenorhabditis briggsae.